A 296-amino-acid chain; its full sequence is NAD kinase (296 aa).

The active-site Proton acceptor is the D73. NAD(+) contacts are provided by residues D73–G74, K78, N151–E152, R178, D180, and T191–S196.

This sequence belongs to the NAD kinase family. Requires a divalent metal cation as cofactor.

It localises to the cytoplasm. The enzyme catalyses NAD(+) + ATP = ADP + NADP(+) + H(+). Its function is as follows. Involved in the regulation of the intracellular balance of NAD and NADP, and is a key enzyme in the biosynthesis of NADP. Catalyzes specifically the phosphorylation on 2'-hydroxyl of the adenosine moiety of NAD to yield NADP. This Francisella tularensis subsp. tularensis (strain FSC 198) protein is NAD kinase.